The chain runs to 131 residues: MRVLLILVSLAALAHAESFLKSKTGYQGVQTLPGFIGGSQPHLGGGIGGGRPFISQPNLGGGIGGGIGGGKPFIPQPNLGGGIGSTRPFPRPQYGDYGSRNSCNRQCPSTYGGRGICCRRWGSCCPTNYKG.

Positions 1 to 16 (MRVLLILVSLAALAHA) are cleaved as a signal peptide. 3 disulfides stabilise this stretch: C103–C117, C107–C124, and C118–C125. K130 carries the lysine amide modification.

Strongly expressed in hemocytes, with weaker expression in gills and epidermis. Expressed at low levels in hepatopancreas.

It localises to the cytoplasmic granule. Its function is as follows. Antimicrobial peptide. Has strong antibacterial activity against the Gram-positive bacterium C.glutamicum (MIC=0.4 uM) and the Gram-negative bacterium E.coli (MIC=12.5 uM). Has weak antibacterial activity against the Gram-positive bacterium S.aureus (MIC&gt;50 uM) and the Gram-negative bacterium P.aeruginosa (MIC&gt;50 uM). Has antifungal activity against S.cerevisiae (MIC=12.5) and C.albicans (MIC=6.3 uM). Has weak antifungal activity against the mold B.cinerea. Presents chitin-binding activity. This is Hyastatin from Hyas araneus (Atlantic lyre crab).